Consider the following 496-residue polypeptide: Probable cytosol aminopeptidase (496 aa).

Positions 258 and 263 each coordinate Mn(2+). The active site involves Lys270. Positions 281, 340, and 342 each coordinate Mn(2+). Residue Arg344 is part of the active site.

Belongs to the peptidase M17 family. Mn(2+) is required as a cofactor.

The protein localises to the cytoplasm. The enzyme catalyses Release of an N-terminal amino acid, Xaa-|-Yaa-, in which Xaa is preferably Leu, but may be other amino acids including Pro although not Arg or Lys, and Yaa may be Pro. Amino acid amides and methyl esters are also readily hydrolyzed, but rates on arylamides are exceedingly low.. It catalyses the reaction Release of an N-terminal amino acid, preferentially leucine, but not glutamic or aspartic acids.. Presumably involved in the processing and regular turnover of intracellular proteins. Catalyzes the removal of unsubstituted N-terminal amino acids from various peptides. This is Probable cytosol aminopeptidase from Helicobacter pylori (strain Shi470).